A 50-amino-acid chain; its full sequence is Large ribosomal subunit protein bL33 (50 aa).

Belongs to the bacterial ribosomal protein bL33 family.

The chain is Large ribosomal subunit protein bL33 from Hydrogenovibrio crunogenus (strain DSM 25203 / XCL-2) (Thiomicrospira crunogena).